The following is a 285-amino-acid chain: Phosphatidate cytidylyltransferase (285 aa).

8 helical membrane passes run 10–30 (FVLI…GFAI), 56–76 (VWLA…LPEY), 93–113 (LGWW…AAIW), 121–141 (LIFG…LRAW), 151–171 (AIWL…AYMF), 190–210 (WQGF…YGMW), 213–233 (LDVA…ASVL), and 264–284 (IDSL…VFRT).

Belongs to the CDS family.

It is found in the cell inner membrane. The enzyme catalyses a 1,2-diacyl-sn-glycero-3-phosphate + CTP + H(+) = a CDP-1,2-diacyl-sn-glycerol + diphosphate. It participates in phospholipid metabolism; CDP-diacylglycerol biosynthesis; CDP-diacylglycerol from sn-glycerol 3-phosphate: step 3/3. The sequence is that of Phosphatidate cytidylyltransferase (cdsA) from Escherichia coli O157:H7.